Here is a 62-residue protein sequence, read N- to C-terminus: MNAKLIYLLLVVTTMMLTFDTTQAGDIKCSGTRQCWGPCKKQTTCTNSKCMNGKCKCYGCVG.

Positions 1–24 (MNAKLIYLLLVVTTMMLTFDTTQA) are cleaved as a signal peptide. Cystine bridges form between cysteine 29–cysteine 50, cysteine 35–cysteine 55, cysteine 39–cysteine 57, and cysteine 45–cysteine 60. Residue valine 61 is modified to Valine amide.

This sequence belongs to the short scorpion toxin superfamily. Potassium channel inhibitor family. Alpha-KTx 06 subfamily. C-terminal amidation is important for activity. There is a 50-70-fold decrease in ability to inhibit Kv1.2/KCNA2 when the toxin is not amidated. This decrease may be explained by a 23-fold slower association rate (k(on)) together with a 2-fold faster dissociation rate (k(off)). Expressed by the venom gland.

The protein localises to the secreted. Its function is as follows. Reversible blocker of voltage-gated potassium channels with fast binding and unbinding kinetics. Has highest activity on human voltage-gated potassium channel Kv1.2/KCNA2 channels (IC(50)=0.11-0.16 nM), whereas its affinity for other channels tested was in the nanomolar range (hKv1.1/KCNA1, IC(50)=253 nM; hKv1.3/KCNA3, IC(50)=91 nM; and hKCa3.1/KCNN4, IC(50)=70 nM). The chain is Potassium channel toxin alpha-KTx 6.21 from Urodacus yaschenkoi (Inland robust scorpion).